Here is a 561-residue protein sequence, read N- to C-terminus: Putative transport protein YbjL (561 aa).

The next 5 membrane-spanning stretches (helical) occupy residues 8–28, 32–52, 66–86, 94–114, and 158–178; these read LLNG…LCLG, LGSI…LLGQ, FMLF…SIFF, MLAL…GKLF, and NLSL…IVGA. RCK C-terminal domains are found at residues 200-288 and 292-373; these read RGLD…SFRN and VFDR…RIGF. Helical transmembrane passes span 383–403, 406–426, 451–471, 475–495, and 540–560; these read LLAF…TFQF, FSFG…LGFM, VFMA…LGAI, MLIA…LFGA, and AIAN…WPGL.

Belongs to the AAE transporter (TC 2.A.81) family. YbjL subfamily.

The protein localises to the cell membrane. The sequence is that of Putative transport protein YbjL from Shigella flexneri.